Reading from the N-terminus, the 471-residue chain is Metal tolerance protein C1 (471 aa).

Topologically, residues 1–78 are cytoplasmic; that stretch reads MGIIRFQILN…PGEEGEKIFR (78 aa). Residues 79 to 99 traverse the membrane as a helical segment; the sequence is LGLTADIGLSVAKALTGYLCG. Residues 100 to 101 lie on the Vacuolar side of the membrane; it reads ST. Residues 102 to 122 traverse the membrane as a helical segment; it reads AIIADAAHSVSDVVLSGVALV. The Cytoplasmic portion of the chain corresponds to 123–144; that stretch reads SYRAANVPKDKEHPYGHGKFET. A helical transmembrane segment spans residues 145 to 165; the sequence is LGALGISAMLLATGSGIAWHA. Residues 166–192 lie on the Vacuolar side of the membrane; the sequence is LDLLSIALSAAPEVIHSGHHHGIDMNH. The helical transmembrane segment at 193–213 threads the bilayer; that stretch reads PILALTVTIASISIKEGLYWI. At 214-236 the chain is on the cytoplasmic side; that stretch reads TKRAGEKQGSGLMMANAWHHRSD. A helical transmembrane segment spans residues 237–257; that stretch reads AISSLVALVGVGGSILGVNFL. Over 258 to 423 the chain is Vacuolar; it reads DPLAGLVVST…RITPHLLHSK (166 aa). A helical membrane pass occupies residues 424–444; it reads ILLQIVVAMPSTMSIQDVMIA. Topologically, residues 445-471 are cytoplasmic; the sequence is AEHAEKEILKAAPNVARVSIQLSLNSE.

This sequence belongs to the cation diffusion facilitator (CDF) transporter (TC 2.A.4) family.

It localises to the vacuole membrane. Its function is as follows. Involved in sequestration of excess metal in the cytoplasm into vacuoles to maintain metal homeostasis. In Arabidopsis thaliana (Mouse-ear cress), this protein is Metal tolerance protein C1 (MTPC1).